A 310-amino-acid chain; its full sequence is Aspartate carbamoyltransferase catalytic subunit 1 (310 aa).

Carbamoyl phosphate contacts are provided by arginine 55 and threonine 56. Lysine 85 is a binding site for L-aspartate. Residues arginine 106, histidine 134, and glutamine 137 each contribute to the carbamoyl phosphate site. Arginine 167 and arginine 228 together coordinate L-aspartate. Residues leucine 266 and proline 267 each coordinate carbamoyl phosphate.

This sequence belongs to the aspartate/ornithine carbamoyltransferase superfamily. ATCase family. In terms of assembly, heterododecamer (2C3:3R2) of six catalytic PyrB chains organized as two trimers (C3), and six regulatory PyrI chains organized as three dimers (R2).

The catalysed reaction is carbamoyl phosphate + L-aspartate = N-carbamoyl-L-aspartate + phosphate + H(+). It functions in the pathway pyrimidine metabolism; UMP biosynthesis via de novo pathway; (S)-dihydroorotate from bicarbonate: step 2/3. Its function is as follows. Catalyzes the condensation of carbamoyl phosphate and aspartate to form carbamoyl aspartate and inorganic phosphate, the committed step in the de novo pyrimidine nucleotide biosynthesis pathway. This Shewanella halifaxensis (strain HAW-EB4) protein is Aspartate carbamoyltransferase catalytic subunit 1.